The following is a 397-amino-acid chain: 2-acyl-1-lysophosphatidylinositol acyltransferase (397 aa).

Residues 112-117 carry the HXXXXD motif motif; the sequence is HQIYTD.

This sequence belongs to the 1-acyl-sn-glycerol-3-phosphate acyltransferase family.

Its subcellular location is the lipid droplet. It catalyses the reaction 1-heptadecanoyl-sn-glycero-3-phosphate + octadecanoyl-CoA = 1-heptadecanoyl-2-octadecanoyl-sn-glycero-3-phosphate + CoA. It carries out the reaction 1-heptadecanoyl-sn-glycero-3-phosphate + tetradecanoyl-CoA = 1-heptadecanoyl-2-tetradecanoyl-sn-glycero-3-phosphate + CoA. The enzyme catalyses 1-heptadecanoyl-sn-glycero-3-phosphate + hexadecanoyl-CoA = 1-heptadecanoyl-2-hexadecanoyl-sn-glycero-3-phosphate + CoA. Acyltransferase with lysophosphatidic acid acyltransferase (LPAAT) activity. Fatty acyl substrates include 18:0-acyl-CoA, 16:0-acyl-CoA, 17:0-acyl-CoA and 14:0-acyl-CoA. Responsible for the acyl-CoA-dependent introduction of saturated very long chain fatty acids (VLCFAs) into phosphatidylinositol, transferring saturated FAs with 18 to 26 carbon atoms. Responsible for the incorporation of stearate into phosphatidylinositol. Overexpression has an effect on chromosome stability. Regulates phosphorylation and expression of glycerol-3-phosphate acyltransferase SCT1. This is 2-acyl-1-lysophosphatidylinositol acyltransferase from Saccharomyces cerevisiae (strain ATCC 204508 / S288c) (Baker's yeast).